The following is a 280-amino-acid chain: UDP-3-O-acyl-N-acetylglucosamine deacetylase (280 aa).

Zn(2+) contacts are provided by His79, His237, and Asp241. His264 serves as the catalytic Proton donor.

Belongs to the LpxC family. It depends on Zn(2+) as a cofactor.

It carries out the reaction a UDP-3-O-[(3R)-3-hydroxyacyl]-N-acetyl-alpha-D-glucosamine + H2O = a UDP-3-O-[(3R)-3-hydroxyacyl]-alpha-D-glucosamine + acetate. The protein operates within glycolipid biosynthesis; lipid IV(A) biosynthesis; lipid IV(A) from (3R)-3-hydroxytetradecanoyl-[acyl-carrier-protein] and UDP-N-acetyl-alpha-D-glucosamine: step 2/6. Functionally, catalyzes the hydrolysis of UDP-3-O-myristoyl-N-acetylglucosamine to form UDP-3-O-myristoylglucosamine and acetate, the committed step in lipid A biosynthesis. The polypeptide is UDP-3-O-acyl-N-acetylglucosamine deacetylase (Chlamydia abortus (strain DSM 27085 / S26/3) (Chlamydophila abortus)).